A 368-amino-acid polypeptide reads, in one-letter code: Propane 2-monooxygenase, hydroxylase component small subunit (368 aa).

Over residues 1-17 (MSAPEKPRERSFPKIEF) the composition is skewed to basic and acidic residues. Positions 1–32 (MSAPEKPRERSFPKIEFTDSEAGAKEFPSSKS) are disordered.

This sequence belongs to the TmoE/XamoE family. In terms of assembly, the propane 2-monooxygenase multicomponent enzyme system is composed of an electron transfer component and a monooxygenase component interacting with the effector protein MimD. The electron transfer component is composed of a reductase (MimB), and the monooxygenase component is formed by a large subunit (MimA) and a small subunit (MimC). Requires the presence of the chaperonin-like protein MimG to ensure a productive folding, resulting of a soluble MimC, which leads to the active form of MimABCD.

It carries out the reaction propane + NADH + O2 + H(+) = propan-2-ol + NAD(+) + H2O. The enzyme catalyses acetone + NADH + O2 + H(+) = hydroxyacetone + NAD(+) + H2O. It catalyses the reaction butan-2-one + NADH + O2 + H(+) = 1-hydroxy-2-butanone + NAD(+) + H2O. The catalysed reaction is phenol + NADH + O2 + H(+) = hydroquinone + NAD(+) + H2O. In terms of biological role, component of the propane 2-monooxygenase multicomponent enzyme system which is involved in the degradation of propane via the O2-dependent hydroxylation of propane. Also involved in the degradation of acetone via the O2-dependent hydroxylation of acetone. Also able to catalyze the oxidation of phenol, methylethylketone (2-butanone), 1-propanol and 2-propanol. In Mycolicibacterium smegmatis (strain ATCC 700084 / mc(2)155) (Mycobacterium smegmatis), this protein is Propane 2-monooxygenase, hydroxylase component small subunit.